Reading from the N-terminus, the 336-residue chain is Holliday junction branch migration complex subunit RuvB (336 aa).

Positions 1-185 are large ATPase domain (RuvB-L); it reads MSIIVERLLS…FGVLSRVEYY (185 aa). ATP-binding positions include Leu-24, Arg-25, Gly-66, Lys-69, Thr-70, Thr-71, 132 to 134, Arg-175, Tyr-185, and Arg-222; that span reads EDF. Thr-70 provides a ligand contact to Mg(2+). The segment at 186–256 is small ATPAse domain (RuvB-S); the sequence is TVDQLSAIVE…ITQMALELLQ (71 aa). The interval 259–336 is head domain (RuvB-H); the sequence is KLGLDHIDHK…EHFGMEIPKV (78 aa). Residues Arg-314 and Arg-319 each coordinate DNA.

Belongs to the RuvB family. As to quaternary structure, homohexamer. Forms an RuvA(8)-RuvB(12)-Holliday junction (HJ) complex. HJ DNA is sandwiched between 2 RuvA tetramers; dsDNA enters through RuvA and exits via RuvB. An RuvB hexamer assembles on each DNA strand where it exits the tetramer. Each RuvB hexamer is contacted by two RuvA subunits (via domain III) on 2 adjacent RuvB subunits; this complex drives branch migration. In the full resolvosome a probable DNA-RuvA(4)-RuvB(12)-RuvC(2) complex forms which resolves the HJ.

The protein resides in the cytoplasm. The catalysed reaction is ATP + H2O = ADP + phosphate + H(+). In terms of biological role, the RuvA-RuvB-RuvC complex processes Holliday junction (HJ) DNA during genetic recombination and DNA repair, while the RuvA-RuvB complex plays an important role in the rescue of blocked DNA replication forks via replication fork reversal (RFR). RuvA specifically binds to HJ cruciform DNA, conferring on it an open structure. The RuvB hexamer acts as an ATP-dependent pump, pulling dsDNA into and through the RuvAB complex. RuvB forms 2 homohexamers on either side of HJ DNA bound by 1 or 2 RuvA tetramers; 4 subunits per hexamer contact DNA at a time. Coordinated motions by a converter formed by DNA-disengaged RuvB subunits stimulates ATP hydrolysis and nucleotide exchange. Immobilization of the converter enables RuvB to convert the ATP-contained energy into a lever motion, pulling 2 nucleotides of DNA out of the RuvA tetramer per ATP hydrolyzed, thus driving DNA branch migration. The RuvB motors rotate together with the DNA substrate, which together with the progressing nucleotide cycle form the mechanistic basis for DNA recombination by continuous HJ branch migration. Branch migration allows RuvC to scan DNA until it finds its consensus sequence, where it cleaves and resolves cruciform DNA. This Bacillus cereus (strain ATCC 14579 / DSM 31 / CCUG 7414 / JCM 2152 / NBRC 15305 / NCIMB 9373 / NCTC 2599 / NRRL B-3711) protein is Holliday junction branch migration complex subunit RuvB.